The sequence spans 438 residues: Serine/threonine exchanger SteT (438 aa).

Topologically, residues 1-11 (MHTEDNGLKKE) are cytoplasmic. Residues 12 to 32 (IGLLFALTLVIGTIIGSGVFM) traverse the membrane as a helical segment. The Extracellular portion of the chain corresponds to 33-45 (KPGAVLAYSGDSK). Residues 46 to 66 (MALFAWLLGGILTLAGGLTIA) form a helical membrane-spanning segment. The Cytoplasmic segment spans residues 67-98 (EIGTQIPKTGGLYTYLEEVYGEFWGFLCGWVQ). Residues 99 to 119 (IIIYGPAIIGALGLYFGSLMA) form a helical membrane-spanning segment. Topologically, residues 120–126 (NLFGWGS) are extracellular. A helical membrane pass occupies residues 127–147 (GLSKVIGIIAVLFLCVINIIG). Residues 148 to 151 (TKYG) are Cytoplasmic-facing. Residues 152–172 (GFVQTLTTIGKLIPIACIIVF) form a helical membrane-spanning segment. At 173–193 (GLWKGDQHIFTAVNESISDMN) the chain is on the extracellular side. A helical transmembrane segment spans residues 194–214 (FGAAILATLFAYDGWILLAAL). Residues 215 to 230 (GGEMKNPEKLLPRAMT) are Cytoplasmic-facing. The helical transmembrane segment at 231-251 (GGLLIVTAIYIFINFALLHIL) threads the bilayer. The Extracellular segment spans residues 252 to 269 (SANEIVTLGENATSTAAT). A helical transmembrane segment spans residues 270–290 (MLFGSIGGKLISVGIIVSIFG). Topologically, residues 291 to 327 (CLNGKVLSFPRVSFAMAERKQLPFAEKLSHVHPSFRT) are cytoplasmic. A helical transmembrane segment spans residues 328–348 (PWIAISFQIALALIMMLISNP). Topologically, residues 349–352 (DKLS) are extracellular. A helical membrane pass occupies residues 353 to 373 (EISIFMIYIFYVMAFFAVFIL). The Cytoplasmic segment spans residues 374–388 (RKRAKGEKRAYSVPL). A helical transmembrane segment spans residues 389–409 (YPFMPILAIAGSFFVLGSTLI). Residues 410-411 (TD) lie on the Extracellular side of the membrane. The chain crosses the membrane as a helical span at residues 412–432 (TMSCGLSILIGLAGLPVYYGM). The Cytoplasmic portion of the chain corresponds to 433-438 (KKRKAS).

It belongs to the amino acid-polyamine-organocation (APC) superfamily. L-type amino acid transporter (LAT) (TC 2.A.3.8) family. As to quaternary structure, monomer.

It is found in the cell membrane. Its function is as follows. Exhibits an obligate exchange activity for serine, threonine and aromatic amino acids. This Bacillus subtilis (strain 168) protein is Serine/threonine exchanger SteT (steT).